We begin with the raw amino-acid sequence, 305 residues long: Homoserine O-acetyltransferase (305 aa).

The active-site Acyl-thioester intermediate is Cys142. 2 residues coordinate substrate: Lys163 and Ser192. The Proton acceptor role is filled by His235. The active site involves Glu237. Residue Arg249 coordinates substrate.

The protein belongs to the MetA family.

The protein localises to the cytoplasm. It catalyses the reaction L-homoserine + acetyl-CoA = O-acetyl-L-homoserine + CoA. It functions in the pathway amino-acid biosynthesis; L-methionine biosynthesis via de novo pathway; O-acetyl-L-homoserine from L-homoserine: step 1/1. Its function is as follows. Transfers an acetyl group from acetyl-CoA to L-homoserine, forming acetyl-L-homoserine. The chain is Homoserine O-acetyltransferase from Bacteroides fragilis (strain ATCC 25285 / DSM 2151 / CCUG 4856 / JCM 11019 / LMG 10263 / NCTC 9343 / Onslow / VPI 2553 / EN-2).